The chain runs to 64 residues: Large ribosomal subunit protein bL32 (64 aa).

Belongs to the bacterial ribosomal protein bL32 family.

In Flavobacterium johnsoniae (strain ATCC 17061 / DSM 2064 / JCM 8514 / BCRC 14874 / CCUG 350202 / NBRC 14942 / NCIMB 11054 / UW101) (Cytophaga johnsonae), this protein is Large ribosomal subunit protein bL32.